A 452-amino-acid chain; its full sequence is Trigger factor (452 aa).

Residues 171–256 (GDRVTLAFKG…ATLIEAPQDA (86 aa)) enclose the PPIase FKBP-type domain.

It belongs to the FKBP-type PPIase family. Tig subfamily.

The protein resides in the cytoplasm. It catalyses the reaction [protein]-peptidylproline (omega=180) = [protein]-peptidylproline (omega=0). Its function is as follows. Involved in protein export. Acts as a chaperone by maintaining the newly synthesized protein in an open conformation. Functions as a peptidyl-prolyl cis-trans isomerase. The sequence is that of Trigger factor from Afipia carboxidovorans (strain ATCC 49405 / DSM 1227 / KCTC 32145 / OM5) (Oligotropha carboxidovorans).